Reading from the N-terminus, the 398-residue chain is uncharacterized protein (398 aa).

The N-terminal stretch at 1-21 (MRKVGITLSVVALVIMGFVAG) is a signal peptide. The residue at position 22 (cysteine 22) is an N-acetylcysteine. Residue cysteine 22 is the site of S-archaeol cysteine attachment.

It belongs to the BMP lipoprotein family.

It is found in the cell membrane. This is an uncharacterized protein from Pyrococcus furiosus (strain ATCC 43587 / DSM 3638 / JCM 8422 / Vc1).